The primary structure comprises 275 residues: Light-independent protochlorophyllide reductase iron-sulfur ATP-binding protein (275 aa).

Residues 12–17 and K41 contribute to the ATP site; that span reads GIGKST. Residue S16 participates in Mg(2+) binding. Residues C97 and C131 each contribute to the [4Fe-4S] cluster site. 182–183 lines the ATP pocket; sequence NR.

This sequence belongs to the NifH/BchL/ChlL family. In terms of assembly, homodimer. Protochlorophyllide reductase is composed of three subunits; BchL, BchN and BchB. It depends on [4Fe-4S] cluster as a cofactor.

It carries out the reaction chlorophyllide a + oxidized 2[4Fe-4S]-[ferredoxin] + 2 ADP + 2 phosphate = protochlorophyllide a + reduced 2[4Fe-4S]-[ferredoxin] + 2 ATP + 2 H2O. It functions in the pathway porphyrin-containing compound metabolism; bacteriochlorophyll biosynthesis (light-independent). In terms of biological role, component of the dark-operative protochlorophyllide reductase (DPOR) that uses Mg-ATP and reduced ferredoxin to reduce ring D of protochlorophyllide (Pchlide) to form chlorophyllide a (Chlide). This reaction is light-independent. The L component serves as a unique electron donor to the NB-component of the complex, and binds Mg-ATP. The chain is Light-independent protochlorophyllide reductase iron-sulfur ATP-binding protein from Chlorobium limicola (strain DSM 245 / NBRC 103803 / 6330).